The sequence spans 267 residues: Diphthine--ammonia ligase (267 aa).

Tyrosine 97 is modified (phosphotyrosine).

The protein belongs to the Diphthine--ammonia ligase family.

It carries out the reaction diphthine-[translation elongation factor 2] + NH4(+) + ATP = diphthamide-[translation elongation factor 2] + AMP + diphosphate + H(+). It participates in protein modification; peptidyl-diphthamide biosynthesis. Functionally, amidase that catalyzes the last step of diphthamide biosynthesis using ammonium and ATP. Diphthamide biosynthesis consists in the conversion of an L-histidine residue in the translation elongation factor eEF-2 (EEF2) to diphthamide. This chain is Diphthine--ammonia ligase (DPH6), found in Bos taurus (Bovine).